The chain runs to 389 residues: Probable dual-specificity RNA methyltransferase RlmN (389 aa).

Glu114 serves as the catalytic Proton acceptor. The 239-residue stretch at 120-358 (QHYGLSVCVT…CVVRQEHGTD (239 aa)) folds into the Radical SAM core domain. Cys127 and Cys363 are joined by a disulfide. [4Fe-4S] cluster-binding residues include Cys134, Cys138, and Cys141. S-adenosyl-L-methionine is bound by residues 186–187 (GE), Ser218, 241–243 (SLH), and Asn319. Cys363 functions as the S-methylcysteine intermediate in the catalytic mechanism. The interval 370 to 389 (TMKRDRQKAVAEASGKSEGK) is disordered. The segment covering 371–389 (MKRDRQKAVAEASGKSEGK) has biased composition (basic and acidic residues).

The protein belongs to the radical SAM superfamily. RlmN family. Requires [4Fe-4S] cluster as cofactor.

It localises to the cytoplasm. The catalysed reaction is adenosine(2503) in 23S rRNA + 2 reduced [2Fe-2S]-[ferredoxin] + 2 S-adenosyl-L-methionine = 2-methyladenosine(2503) in 23S rRNA + 5'-deoxyadenosine + L-methionine + 2 oxidized [2Fe-2S]-[ferredoxin] + S-adenosyl-L-homocysteine. The enzyme catalyses adenosine(37) in tRNA + 2 reduced [2Fe-2S]-[ferredoxin] + 2 S-adenosyl-L-methionine = 2-methyladenosine(37) in tRNA + 5'-deoxyadenosine + L-methionine + 2 oxidized [2Fe-2S]-[ferredoxin] + S-adenosyl-L-homocysteine. Its function is as follows. Specifically methylates position 2 of adenine 2503 in 23S rRNA and position 2 of adenine 37 in tRNAs. The sequence is that of Probable dual-specificity RNA methyltransferase RlmN from Streptococcus thermophilus (strain CNRZ 1066).